A 244-amino-acid polypeptide reads, in one-letter code: GTP cyclohydrolase 1 type 2 homolog (244 aa).

The a divalent metal cation site is built by histidine 65, histidine 66, aspartate 102, histidine 216, and glutamate 220.

It belongs to the GTP cyclohydrolase I type 2/NIF3 family. As to quaternary structure, homohexamer; trimer of dimers, that forms a hollow cage-like architecture.

Its function is as follows. DNA-binding protein exhibiting the ability to bind to both single-stranded and double-stranded DNA. In Methanocaldococcus jannaschii (strain ATCC 43067 / DSM 2661 / JAL-1 / JCM 10045 / NBRC 100440) (Methanococcus jannaschii), this protein is GTP cyclohydrolase 1 type 2 homolog.